The sequence spans 417 residues: NADH-quinone oxidoreductase subunit D (417 aa).

This sequence belongs to the complex I 49 kDa subunit family. As to quaternary structure, NDH-1 is composed of 14 different subunits. Subunits NuoB, C, D, E, F, and G constitute the peripheral sector of the complex.

It is found in the cell inner membrane. The catalysed reaction is a quinone + NADH + 5 H(+)(in) = a quinol + NAD(+) + 4 H(+)(out). In terms of biological role, NDH-1 shuttles electrons from NADH, via FMN and iron-sulfur (Fe-S) centers, to quinones in the respiratory chain. The immediate electron acceptor for the enzyme in this species is believed to be ubiquinone. Couples the redox reaction to proton translocation (for every two electrons transferred, four hydrogen ions are translocated across the cytoplasmic membrane), and thus conserves the redox energy in a proton gradient. This chain is NADH-quinone oxidoreductase subunit D, found in Legionella pneumophila (strain Corby).